Here is a 347-residue protein sequence, read N- to C-terminus: Phosphoribosylformylglycinamidine cyclo-ligase (347 aa).

Belongs to the AIR synthase family.

It localises to the cytoplasm. It carries out the reaction 2-formamido-N(1)-(5-O-phospho-beta-D-ribosyl)acetamidine + ATP = 5-amino-1-(5-phospho-beta-D-ribosyl)imidazole + ADP + phosphate + H(+). It participates in purine metabolism; IMP biosynthesis via de novo pathway; 5-amino-1-(5-phospho-D-ribosyl)imidazole from N(2)-formyl-N(1)-(5-phospho-D-ribosyl)glycinamide: step 2/2. The chain is Phosphoribosylformylglycinamidine cyclo-ligase from Syntrophus aciditrophicus (strain SB).